The sequence spans 153 residues: Type II secretion system core protein G (153 aa).

The propeptide at 1–7 (MERRQRG) is leader sequence. Position 8 is an N-methylphenylalanine (Phe-8). The helical transmembrane segment at 8-28 (FTLLEIMVVIVILGVLASLVV) threads the bilayer. Disordered stretches follow at residues 68 to 91 (EQGLGALVKKPTTPPEPRNYPQDG) and 126 to 153 (MPDTDDDIGNWNVGNGAHNNGGNGNGNP). The span at 134 to 143 (GNWNVGNGAH) shows a compositional bias: low complexity. Gly residues predominate over residues 144 to 153 (NNGGNGNGNP).

The protein belongs to the GSP G family. In terms of assembly, type II secretion system is composed of four main components: the outer membrane complex, the inner membrane complex, the cytoplasmic secretion ATPase and the periplasm-spanning pseudopilus. Forms homomultimers. In terms of processing, cleaved by the prepilin peptidase. Post-translationally, methylated by prepilin peptidase at the amino group of the N-terminal phenylalanine once the leader sequence is cleaved.

The protein localises to the cell inner membrane. Functionally, core component of the type II secretion system required for the energy-dependent secretion of extracellular factors such as proteases and toxins from the periplasm. Pseudopilin (pilin-like) protein that polymerizes to form the pseudopilus. Further polymerization triggers pseudopilus growth. The chain is Type II secretion system core protein G (outG) from Dickeya chrysanthemi (Pectobacterium chrysanthemi).